The primary structure comprises 310 residues: Putative S-adenosyl-L-methionine-dependent methyltransferase MAP_2076c (310 aa).

S-adenosyl-L-methionine contacts are provided by residues Asp131 and 160-161 (DL).

This sequence belongs to the UPF0677 family.

Exhibits S-adenosyl-L-methionine-dependent methyltransferase activity. This chain is Putative S-adenosyl-L-methionine-dependent methyltransferase MAP_2076c, found in Mycolicibacterium paratuberculosis (strain ATCC BAA-968 / K-10) (Mycobacterium paratuberculosis).